The primary structure comprises 244 residues: Transcriptional activator protein PhzR (244 aa).

The region spanning 177–242 (AFNTDVEFSE…QAVSYAVALG (66 aa)) is the HTH luxR-type domain. Positions 201-220 (SEEIGVIMGVCTDTVNYHHR) form a DNA-binding region, H-T-H motif.

This sequence belongs to the autoinducer-regulated transcriptional regulatory protein family.

Its function is as follows. Positive regulator of phenazine antibiotic production. May activate the phenazine biosynthetic genes by binding to a DNA sequence upstream of them, or to an intermediate gene which, in turn, interacts with them. The polypeptide is Transcriptional activator protein PhzR (phzR) (Pseudomonas fluorescens).